The chain runs to 460 residues: Oxysterols receptor LXR-beta (460 aa).

Residues 1–14 (MSSPTTSSLDTPLP) are compositionally biased toward low complexity. Positions 1–78 (MSSPTTSSLD…PERKRKKGPA (78 aa)) are disordered. Positions 1 to 85 (MSSPTTSSLD…GPAPKMLGHE (85 aa)) are transactivation AF-1; required for ligand-independent transactivation function. Residues 36-45 (EPWPGGPDPD) are compositionally biased toward pro residues. The segment at residues 84-161 (HELCRVCGDK…AGMREQCVLS (78 aa)) is a DNA-binding region (nuclear receptor). 2 consecutive NR C4-type zinc fingers follow at residues 87–107 (CRVC…CEGC) and 125–149 (CRGG…LRKC). Residues 169-216 (KIRKQQQESQSQSQSPVGPQGSSSSASGPGASPGGSEAGSQGSGEGEG) form a disordered region. The segment covering 175–198 (QESQSQSQSPVGPQGSSSSASGPG) has biased composition (low complexity). The span at 199–215 (ASPGGSEAGSQGSGEGE) shows a compositional bias: gly residues. The interval 219 to 460 (LTAAQELMIQ…LLSEIWDVHE (242 aa)) is transactivation AF-2; required for ligand-dependent transactivation function; mediates interaction with CCAR2. An NR LBD domain is found at 222-460 (AQELMIQQLV…LLSEIWDVHE (239 aa)). Glycyl lysine isopeptide (Lys-Gly) (interchain with G-Cter in SUMO2) cross-links involve residues Lys409 and Lys447.

This sequence belongs to the nuclear hormone receptor family. NR1 subfamily. In terms of assembly, forms a heterodimer with RXR. Interacts with CCAR2 (via N-terminus) in a ligand-independent manner. Interacts (when sumoylated) with GPS2; interaction with GPS2 onto hepatic acute phase protein promoters prevents N-Cor corepressor complex dissociation. Interacts with ABCA12 and ABCA1; this interaction is required for ABCA1 localization to the cell surface and is necessary for its normal activity and stability. Sumoylated by SUMO2 at Lys-409 and Lys-447 during the hepatic acute phase response, leading to promote interaction with GPS2 and prevent N-Cor corepressor complex dissociation. In terms of tissue distribution, ubiquitous.

Its subcellular location is the nucleus. In terms of biological role, nuclear receptor that exhibits a ligand-dependent transcriptional activation activity. Binds preferentially to double-stranded oligonucleotide direct repeats having the consensus half-site sequence 5'-AGGTCA-3' and 4-nt spacing (DR-4). Regulates cholesterol uptake through MYLIP-dependent ubiquitination of LDLR, VLDLR and LRP8; DLDLR and LRP8. Interplays functionally with RORA for the regulation of genes involved in liver metabolism. Induces LPCAT3-dependent phospholipid remodeling in endoplasmic reticulum (ER) membranes of hepatocytes, driving SREBF1 processing and lipogenesis. Via LPCAT3, triggers the incorporation of arachidonate into phosphatidylcholines of ER membranes, increasing membrane dynamics and enabling triacylglycerols transfer to nascent very low-density lipoprotein (VLDL) particles. Via LPCAT3 also counteracts lipid-induced ER stress response and inflammation, likely by modulating SRC kinase membrane compartmentalization and limiting the synthesis of lipid inflammatory mediators. Plays an anti-inflammatory role during the hepatic acute phase response by acting as a corepressor: inhibits the hepatic acute phase response by preventing dissociation of the N-Cor corepressor complex. The sequence is that of Oxysterols receptor LXR-beta (NR1H2) from Homo sapiens (Human).